The primary structure comprises 215 residues: Calmodulin-like protein 5 (215 aa).

Residues 38–61 (KNSPPSPSTMLPSPSSSSAPTKRI) form a disordered region. Over residues 45 to 57 (STMLPSPSSSSAP) the composition is skewed to low complexity. EF-hand domains lie at 61 to 96 (IDPS…LGIY), 97 to 132 (IPDK…IVDE), 139 to 174 (TEEE…LGLK), and 177 to 212 (KTLD…GGFS). Asp74, Asn76, Asp78, Arg80, Glu85, Asp110, Asn112, Asp114, Cys116, Glu121, Asp152, Asp154, Asp156, Glu163, Asp190, Asp192, Asp194, Arg196, and Glu201 together coordinate Ca(2+).

It belongs to the calmodulin family.

In terms of biological role, potential calcium sensor. This is Calmodulin-like protein 5 (CML5) from Arabidopsis thaliana (Mouse-ear cress).